A 427-amino-acid chain; its full sequence is 3-phosphoshikimate 1-carboxyvinyltransferase (427 aa).

3-phosphoshikimate-binding residues include lysine 20, serine 21, and arginine 25. Lysine 20 provides a ligand contact to phosphoenolpyruvate. The phosphoenolpyruvate site is built by glycine 92 and arginine 120. The 3-phosphoshikimate site is built by serine 166, glutamine 168, aspartate 312, and lysine 339. Glutamine 168 provides a ligand contact to phosphoenolpyruvate. Aspartate 312 serves as the catalytic Proton acceptor. Phosphoenolpyruvate-binding residues include arginine 343 and arginine 385.

The protein belongs to the EPSP synthase family. In terms of assembly, monomer.

The protein localises to the cytoplasm. It carries out the reaction 3-phosphoshikimate + phosphoenolpyruvate = 5-O-(1-carboxyvinyl)-3-phosphoshikimate + phosphate. It participates in metabolic intermediate biosynthesis; chorismate biosynthesis; chorismate from D-erythrose 4-phosphate and phosphoenolpyruvate: step 6/7. In terms of biological role, catalyzes the transfer of the enolpyruvyl moiety of phosphoenolpyruvate (PEP) to the 5-hydroxyl of shikimate-3-phosphate (S3P) to produce enolpyruvyl shikimate-3-phosphate and inorganic phosphate. The sequence is that of 3-phosphoshikimate 1-carboxyvinyltransferase from Streptococcus pyogenes serotype M49 (strain NZ131).